Reading from the N-terminus, the 316-residue chain is Olfactory receptor 2K2 (316 aa).

Residues 1-20 (MQGENFTIWSIFFLEGFSQY) are Extracellular-facing. Residue asparagine 5 is glycosylated (N-linked (GlcNAc...) asparagine). Residues 21-41 (PGLEVVLFVFSLVMYLTTLLG) traverse the membrane as a helical segment. Over 42–65 (NSTLILITILDSRLKTPMYLFLGN) the chain is Cytoplasmic. Residues 66–86 (LSFMDICYTSASVPTLLVNLL) form a helical membrane-spanning segment. The Extracellular portion of the chain corresponds to 87–97 (SSQKTIIFSGC). Cysteines 97 and 188 form a disulfide. A helical membrane pass occupies residues 98–118 (AVQMYLSLAMGSTECVLLAVM). The Cytoplasmic segment spans residues 119-143 (AYDRYVAICNPLRYSIIMNRCVCAR). The chain crosses the membrane as a helical span at residues 144 to 164 (MATVSWVTGCLTALLETSFAL). Topologically, residues 165-199 (QIPLCGNLIDHFTCEILAVLKLACTSSLLMNTIML) are extracellular. A helical membrane pass occupies residues 200–220 (VVSILLLPIPMLLVCISYIFI). The Cytoplasmic portion of the chain corresponds to 221 to 238 (LSTILRITSAEGRNKAFS). Residues 239–259 (TCGAHLTVVILYYGAALSMYL) traverse the membrane as a helical segment. At 260–270 (KPSSSNAQKID) the chain is on the extracellular side. A helical membrane pass occupies residues 271–291 (KIISLLYGVLTPMLNPIIYSL). Over 292-316 (RNKEVKDAMKKLLGKITLHQTHEHL) the chain is Cytoplasmic.

Belongs to the G-protein coupled receptor 1 family.

It is found in the cell membrane. Functionally, odorant receptor. This is Olfactory receptor 2K2 (OR2K2) from Homo sapiens (Human).